The primary structure comprises 429 residues: Enolase (429 aa).

Gln162 provides a ligand contact to (2R)-2-phosphoglycerate. The active-site Proton donor is the Glu204. Positions 241, 288, and 315 each coordinate Mg(2+). (2R)-2-phosphoglycerate-binding residues include Lys340, Arg369, Ser370, and Lys391. Lys340 (proton acceptor) is an active-site residue.

This sequence belongs to the enolase family. Requires Mg(2+) as cofactor.

The protein localises to the cytoplasm. It is found in the secreted. Its subcellular location is the cell surface. The catalysed reaction is (2R)-2-phosphoglycerate = phosphoenolpyruvate + H2O. Its pathway is carbohydrate degradation; glycolysis; pyruvate from D-glyceraldehyde 3-phosphate: step 4/5. Its function is as follows. Catalyzes the reversible conversion of 2-phosphoglycerate (2-PG) into phosphoenolpyruvate (PEP). It is essential for the degradation of carbohydrates via glycolysis. This Bacteroides fragilis (strain ATCC 25285 / DSM 2151 / CCUG 4856 / JCM 11019 / LMG 10263 / NCTC 9343 / Onslow / VPI 2553 / EN-2) protein is Enolase.